The following is a 266-amino-acid chain: MKLSVSPPPFDGAPVVVLIAGLGGGGSYWLPQLAALEQEYQVVCYDQRGTGNNPDTLPEEYTLAQMAGELAQALTAVGITRYCVVGHALGALIGLQLALDTPDALKALVCVNGWLTLNAHTRRCFQIRERLLHAGGAQAWVEAQPLFLYPADWMAARAPRLEAEEALALAHFQGKNNLLRRLNALKKADFSRHAARMACPVHLICSADDLLVPSVCSSELQAALPHSHSVVMRQGGHACNVTEPETFNTLLLNGLASLLHSHEPAL.

The protein belongs to the AB hydrolase superfamily. Hydrolase RutD family.

The catalysed reaction is carbamate + 2 H(+) = NH4(+) + CO2. Functionally, involved in pyrimidine catabolism. May facilitate the hydrolysis of carbamate, a reaction that can also occur spontaneously. The chain is Putative carbamate hydrolase RutD from Enterobacter cloacae subsp. cloacae (strain ATCC 13047 / DSM 30054 / NBRC 13535 / NCTC 10005 / WDCM 00083 / NCDC 279-56).